A 211-amino-acid polypeptide reads, in one-letter code: Protein N-terminal glutamine amidohydrolase (211 aa).

Active-site residues include Cys-24, His-78, and Asp-94.

It belongs to the NTAQ1 family. In terms of assembly, monomer.

It carries out the reaction N-terminal L-glutaminyl-[protein] + H2O = N-terminal L-glutamyl-[protein] + NH4(+). In terms of biological role, mediates the side-chain deamidation of N-terminal glutamine residues to glutamate, an important step in N-end rule pathway of protein degradation. Conversion of the resulting N-terminal glutamine to glutamate renders the protein susceptible to arginylation, polyubiquitination and degradation as specified by the N-end rule. Does not act on substrates with internal or C-terminal glutamine and does not act on non-glutamine residues in any position. In Anopheles gambiae (African malaria mosquito), this protein is Protein N-terminal glutamine amidohydrolase (tun).